The following is a 209-amino-acid chain: Small ribosomal subunit protein uS4 (209 aa).

Residues 98–161 (TRLDNVVYRM…AKQLRVQEAL (64 aa)) enclose the S4 RNA-binding domain.

It belongs to the universal ribosomal protein uS4 family. In terms of assembly, part of the 30S ribosomal subunit. Contacts protein S5. The interaction surface between S4 and S5 is involved in control of translational fidelity.

Functionally, one of the primary rRNA binding proteins, it binds directly to 16S rRNA where it nucleates assembly of the body of the 30S subunit. Its function is as follows. With S5 and S12 plays an important role in translational accuracy. The protein is Small ribosomal subunit protein uS4 of Stenotrophomonas maltophilia (strain R551-3).